The sequence spans 404 residues: Argininosuccinate synthase (404 aa).

ATP contacts are provided by residues 10 to 18 (AYSGGVDTS) and A38. Position 89 (Y89) interacts with L-citrulline. G119 lines the ATP pocket. L-aspartate-binding residues include T121, N125, and D126. N125 contributes to the L-citrulline binding site. L-citrulline-binding residues include R129, S177, S186, E262, and Y274.

Belongs to the argininosuccinate synthase family. Type 1 subfamily. In terms of assembly, homotetramer.

Its subcellular location is the cytoplasm. The enzyme catalyses L-citrulline + L-aspartate + ATP = 2-(N(omega)-L-arginino)succinate + AMP + diphosphate + H(+). Its pathway is amino-acid biosynthesis; L-arginine biosynthesis; L-arginine from L-ornithine and carbamoyl phosphate: step 2/3. The protein is Argininosuccinate synthase of Prochlorococcus marinus (strain MIT 9515).